The primary structure comprises 985 residues: Translation initiation factor IF-2 (985 aa).

3 stretches are compositionally biased toward basic and acidic residues: residues 49–58 (QYGKKQEKSS), 65–89 (IQRE…RPDN), and 99–113 (VPNR…DKAK). A disordered region spans residues 49–401 (QYGKKQEKSS…QQSAPPPILD (353 aa)). Residues 125-136 (SKTTTNSENEQT) are compositionally biased toward polar residues. Residues 137 to 162 (APRQGSAQQSGQGRPQANRPQGSQGR) are compositionally biased toward low complexity. 2 stretches are compositionally biased toward gly residues: residues 180 to 246 (PQGG…GQGR) and 288 to 324 (PQGG…GAGR). Basic and acidic residues predominate over residues 349 to 377 (KAPDKTKGDRRKNYEKDGKWADGQIEKNK). Over residues 378-391 (LFKGRNNKNKKRQH) the composition is skewed to basic residues. Residues 485 to 654 (LRPPVVTIMG…LLVAEVHELK (170 aa)) form the tr-type G domain. The segment at 494–501 (GHVDHGKT) is G1. 494–501 (GHVDHGKT) contributes to the GTP binding site. The segment at 519-523 (GITQH) is G2. The G3 stretch occupies residues 540–543 (DTPG). GTP contacts are provided by residues 540–544 (DTPGH) and 594–597 (NKMD). The segment at 594 to 597 (NKMD) is G4. A G5 region spans residues 630 to 632 (SAK).

It belongs to the TRAFAC class translation factor GTPase superfamily. Classic translation factor GTPase family. IF-2 subfamily.

Its subcellular location is the cytoplasm. Its function is as follows. One of the essential components for the initiation of protein synthesis. Protects formylmethionyl-tRNA from spontaneous hydrolysis and promotes its binding to the 30S ribosomal subunits. Also involved in the hydrolysis of GTP during the formation of the 70S ribosomal complex. This is Translation initiation factor IF-2 from Desulforamulus reducens (strain ATCC BAA-1160 / DSM 100696 / MI-1) (Desulfotomaculum reducens).